Consider the following 84-residue polypeptide: Small ribosomal subunit protein uS17 (84 aa).

Belongs to the universal ribosomal protein uS17 family. Part of the 30S ribosomal subunit.

One of the primary rRNA binding proteins, it binds specifically to the 5'-end of 16S ribosomal RNA. The polypeptide is Small ribosomal subunit protein uS17 (Clostridium beijerinckii (strain ATCC 51743 / NCIMB 8052) (Clostridium acetobutylicum)).